The following is a 446-amino-acid chain: Protein odr-4 homolog (446 aa).

Helical transmembrane passes span 81 to 101 (MLPGGLLVLSVFIIATPELSK) and 424 to 444 (MGVVIAVAVAVFASIFSFNYF).

The protein belongs to the ODR-4 family.

The protein localises to the membrane. Functionally, may play a role in the trafficking of a subset of G-protein coupled receptors. The protein is Protein odr-4 homolog (ODR4) of Gallus gallus (Chicken).